A 208-amino-acid polypeptide reads, in one-letter code: N-(5'-phosphoribosyl)anthranilate isomerase (208 aa).

This sequence belongs to the TrpF family.

It carries out the reaction N-(5-phospho-beta-D-ribosyl)anthranilate = 1-(2-carboxyphenylamino)-1-deoxy-D-ribulose 5-phosphate. It functions in the pathway amino-acid biosynthesis; L-tryptophan biosynthesis; L-tryptophan from chorismate: step 3/5. In Neisseria gonorrhoeae (strain ATCC 700825 / FA 1090), this protein is N-(5'-phosphoribosyl)anthranilate isomerase.